The following is a 469-amino-acid chain: MSAVMTPAGFTDYKVADITLAAWGRRELIIAESEMPALMGLRRKYAGQQPLKGAKILGCIHMTIQTGVLIETLVALGAEVRWSSCNIFSTQDQAAAAIAAAGIPVFAWKGETEEEYEWCIEQTILKDGQPWDANMVLDDGGDLTEILHKKYPQMLERIHGITEETTTGVHRLLDMLKNGTLKVPAINVNDSVTKSKNDNKYGCRHSLNDAIKRGTDHLLSGKQALVIGYGDVGKGSSQSLRQEGMIVKVAEVDPICAMQACMDGFEVVSPYKNGINDGTEASIDAALLGKIDLIVTTTGNVNVCDANMLKALKKRAVVCNIGHFDNEIDTAFMRKNWAWEEVKPQVHKIHRTGKDGFDAYNDDYLILLAEGRLVNLGNATGHPSRIMDGSFANQVLAQIHLFEQKYADLPAAEKAKRLSVEVLPKKLDEEVALEMVKGFGGVVTQLTPKQAEYIGVSVEGPFKPDTYRY.

Substrate contacts are provided by Thr-63, Asp-139, and Glu-164. Residue 165–167 coordinates NAD(+); it reads TTT. The substrate site is built by Lys-194 and Asp-198. NAD(+)-binding positions include Asn-199, 228 to 233, Glu-251, Asn-300, 321 to 323, and Asn-375; these read GYGDVG and IGH.

The protein belongs to the adenosylhomocysteinase family. The cofactor is NAD(+).

It is found in the cytoplasm. It carries out the reaction S-adenosyl-L-homocysteine + H2O = L-homocysteine + adenosine. It functions in the pathway amino-acid biosynthesis; L-homocysteine biosynthesis; L-homocysteine from S-adenosyl-L-homocysteine: step 1/1. May play a key role in the regulation of the intracellular concentration of adenosylhomocysteine. The chain is Adenosylhomocysteinase from Pseudomonas aeruginosa (strain UCBPP-PA14).